The sequence spans 320 residues: Acetyl-coenzyme A carboxylase carboxyl transferase subunit alpha (320 aa).

The 255-residue stretch at 41 to 295 (RIEEKAGQAL…GEAIAQAFDE (255 aa)) folds into the CoA carboxyltransferase C-terminal domain.

This sequence belongs to the AccA family. Acetyl-CoA carboxylase is a heterohexamer composed of biotin carboxyl carrier protein (AccB), biotin carboxylase (AccC) and two subunits each of ACCase subunit alpha (AccA) and ACCase subunit beta (AccD).

The protein resides in the cytoplasm. The enzyme catalyses N(6)-carboxybiotinyl-L-lysyl-[protein] + acetyl-CoA = N(6)-biotinyl-L-lysyl-[protein] + malonyl-CoA. It functions in the pathway lipid metabolism; malonyl-CoA biosynthesis; malonyl-CoA from acetyl-CoA: step 1/1. Its function is as follows. Component of the acetyl coenzyme A carboxylase (ACC) complex. First, biotin carboxylase catalyzes the carboxylation of biotin on its carrier protein (BCCP) and then the CO(2) group is transferred by the carboxyltransferase to acetyl-CoA to form malonyl-CoA. This chain is Acetyl-coenzyme A carboxylase carboxyl transferase subunit alpha, found in Bradyrhizobium sp. (strain BTAi1 / ATCC BAA-1182).